The primary structure comprises 288 residues: Acetyl-coenzyme A carboxylase carboxyl transferase subunit beta (288 aa).

Residues 34-288 (LFAKCPACKH…HLVSFHGGGQ (255 aa)) form the CoA carboxyltransferase N-terminal domain. Cysteine 38, cysteine 41, cysteine 56, and cysteine 59 together coordinate Zn(2+). The segment at 38-59 (CPACKHMIYKKDLGLAKICPTC) adopts a C4-type zinc-finger fold.

The protein belongs to the AccD/PCCB family. As to quaternary structure, acetyl-CoA carboxylase is a heterohexamer composed of biotin carboxyl carrier protein (AccB), biotin carboxylase (AccC) and two subunits each of ACCase subunit alpha (AccA) and ACCase subunit beta (AccD). Zn(2+) is required as a cofactor.

It localises to the cytoplasm. The enzyme catalyses N(6)-carboxybiotinyl-L-lysyl-[protein] + acetyl-CoA = N(6)-biotinyl-L-lysyl-[protein] + malonyl-CoA. It functions in the pathway lipid metabolism; malonyl-CoA biosynthesis; malonyl-CoA from acetyl-CoA: step 1/1. Component of the acetyl coenzyme A carboxylase (ACC) complex. Biotin carboxylase (BC) catalyzes the carboxylation of biotin on its carrier protein (BCCP) and then the CO(2) group is transferred by the transcarboxylase to acetyl-CoA to form malonyl-CoA. This is Acetyl-coenzyme A carboxylase carboxyl transferase subunit beta from Streptococcus pyogenes serotype M49 (strain NZ131).